Here is a 359-residue protein sequence, read N- to C-terminus: Ornithine cyclodeaminase (359 aa).

The L-ornithine site is built by Arg53 and Lys77. Residues Thr92, Arg120, 147–148 (AQ), Asp169, Thr209, 232–235 (VGGD), Lys239, and Ser300 each bind NAD(+). L-ornithine is bound at residue Arg120. Residue Asp235 coordinates L-ornithine. The Proton donor/acceptor role is filled by Asp235. L-ornithine is bound at residue Val301.

It belongs to the ornithine cyclodeaminase/mu-crystallin family. NAD(+) is required as a cofactor.

The enzyme catalyses L-ornithine = L-proline + NH4(+). Its pathway is amino-acid biosynthesis; L-proline biosynthesis; L-proline from L-ornithine: step 1/1. Functionally, catalyzes the conversion of L-ornithine into L-proline with release of ammonia. In Brucella melitensis biotype 1 (strain ATCC 23456 / CCUG 17765 / NCTC 10094 / 16M), this protein is Ornithine cyclodeaminase.